Reading from the N-terminus, the 416-residue chain is MSILKMMLIYFAIFWVVNAAQLLDIDSQGVIPGAYIVVMKDRVSSLEFSSHVRWLKRTHRRNLAKRATPFTEGLGATWDIAGWQAYSGSFDEDTVQEILNHENVEFVEPNKEMQVASTIKQGNVTWGLSRISHKENSSHDYVSTYGEGENITFYGIDSGIDINQADFTGRARWGINLADHVDTDCNGHGTHTAGTVAGQKFGILKKASIVSIKILDCYGYGDITRYINGLNWAINDAKERGLLGKSVMNISLKTRRSRAVNEATVRAQEAGIFIAVAAGNQATSAEFYSPGSAPEVCTVGASTRNDTKAIFSNYGELGMSWSCILFYTTGTNVNHTVDLFAPGEYIRSTLPHNLTGLMSGTSMATPHVCGVGGLIMATEGLAPEKVCDRLKELANPTIQNPGFNTTNKLLYNGSGA.

Residues 1–19 (MSILKMMLIYFAIFWVVNA) form the signal peptide. Residues 20–116 (AQLLDIDSQG…VEPNKEMQVA (97 aa)) constitute a propeptide that is removed on maturation. Residues 35 to 115 (YIVVMKDRVS…FVEPNKEMQV (81 aa)) form the Inhibitor I9 domain. Residues Asn-123, Asn-136, and Asn-150 are each glycosylated (N-linked (GlcNAc...) asparagine). The Peptidase S8 domain maps to 125-416 (TWGLSRISHK…NKLLYNGSGA (292 aa)). Active-site charge relay system residues include Asp-157 and His-188. Asn-249, Asn-305, Asn-334, and Asn-353 each carry an N-linked (GlcNAc...) asparagine glycan. Ser-362 acts as the Charge relay system in catalysis. Residues Asn-404 and Asn-412 are each glycosylated (N-linked (GlcNAc...) asparagine).

The protein belongs to the peptidase S8 family.

It is found in the secreted. Its function is as follows. Secreted subtilisin-like serine protease with keratinolytic activity that contributes to pathogenicity. In Arthroderma benhamiae (strain ATCC MYA-4681 / CBS 112371) (Trichophyton mentagrophytes), this protein is Subtilisin-like protease 12 (SUB12).